The chain runs to 39 residues: Cytochrome b6-f complex subunit 5 (39 aa).

A helical membrane pass occupies residues 5-25 (LLCGIVLGLVPITLLGLFVSA).

This sequence belongs to the PetG family. In terms of assembly, the 4 large subunits of the cytochrome b6-f complex are cytochrome b6, subunit IV (17 kDa polypeptide, PetD), cytochrome f and the Rieske protein, while the 4 small subunits are PetG, PetL, PetM and PetN. The complex functions as a dimer.

Its subcellular location is the cellular thylakoid membrane. Component of the cytochrome b6-f complex, which mediates electron transfer between photosystem II (PSII) and photosystem I (PSI), cyclic electron flow around PSI, and state transitions. PetG is required for either the stability or assembly of the cytochrome b6-f complex. The chain is Cytochrome b6-f complex subunit 5 from Prochlorococcus marinus subsp. pastoris (strain CCMP1986 / NIES-2087 / MED4).